A 767-amino-acid polypeptide reads, in one-letter code: Cation/H(+) antiporter 27 (767 aa).

The next 11 membrane-spanning stretches (helical) occupy residues 39-59 (LPLLLLQISVFSIFSVSFQFL), 63-83 (FGKFAFLTQMLAGICLGPSVI), 99-119 (VYIIESFEAICFLFICYITTC), 135-155 (INGILLFLIPFVWGQFAAILI), 173-193 (HVAIVQSTMFFQVVYGVLSSL), 205-225 (LASMMVHDCLSWCFFMLNIAI), 242-262 (VLQMIMILVIAYVFRPLMLWM), 280-300 (ICVLLFISCLWAEFVGLPYFF), 323-343 (IGCFVWSVLMPCYVIGIGLNI), 371-391 (IALPSLYYKVPLWHAILVGFI), and 415-435 (KSFGAMVMSATVNSTIFIVIV).

This sequence belongs to the monovalent cation:proton antiporter 2 (CPA2) transporter (TC 2.A.37) family. CHX (TC 2.A.37.4) subfamily. As to expression, specifically expressed in pollen.

Its subcellular location is the membrane. May operate as a cation/H(+) antiporter. In Arabidopsis thaliana (Mouse-ear cress), this protein is Cation/H(+) antiporter 27 (CHX27).